The sequence spans 92 residues: Small ribosomal subunit protein uS19 (92 aa).

The protein belongs to the universal ribosomal protein uS19 family.

Functionally, protein S19 forms a complex with S13 that binds strongly to the 16S ribosomal RNA. The protein is Small ribosomal subunit protein uS19 of Acholeplasma laidlawii (strain PG-8A).